The primary structure comprises 242 residues: Thaumatin-like protein 2 (242 aa).

The N-terminal stretch at M1 to A23 is a signal peptide. Cystine bridges form between C32-C241, C77-C87, C92-C99, C147-C230, C152-C213, C160-C176, C180-C189, and C190-C200.

The protein belongs to the thaumatin family. Preferentially expressed in the abscission zone of fruit. Also expressed in leaf abscission zone.

Its subcellular location is the secreted. May be involved in protecting plant tissues from pathogen infection. This is Thaumatin-like protein 2 from Prunus persica (Peach).